We begin with the raw amino-acid sequence, 3418 residues long: Breast cancer type 2 susceptibility protein (3418 aa).

Residues 1-40 (MPIGSKERPTFFEIFKTRCNKADLGPISLNWFEELSSEAP) are interaction with PALB2. The interval 37–68 (SEAPPYNSEPAEESEHKNNNYEPNLFKTPQRK) is disordered. Residue Ser-70 is modified to Phosphoserine. The segment at 358–381 (VEPNDTDPLDSNVANQKPFESGSD) is disordered. Residues Ser-445, Ser-492, and Ser-755 each carry the phosphoserine modification. An interaction with NPM1 region spans residues 639-1000 (LHSSVKRSCS…NKWAGLLGPI (362 aa)). BRCA2 repeat units lie at residues 1002-1036 (NHSF…DIEE), 1212-1246 (NEVG…DIEN), 1421-1455 (FETS…QKPE), 1517-1551 (KEPT…EKEQ), 1664-1698 (IENS…EGIF), and 1837-1871 (FEVG…DSFS). The interval 1003-2082 (HSFGGSFRTA…LHKVKGVLEE (1080 aa)) is interaction with RAD51. The tract at residues 1338–1781 (GSDSSKNDTV…IEPVLKNVED (444 aa)) is interaction with POLH. The required for stimulation of POLH DNA polymerization activity stretch occupies residues 1410 to 1595 (TATKTEQNIK…TAAPKCKEMQ (186 aa)). Ser-1970 is modified (phosphoserine). Residues 1971-2005 (SANTCGIFSTASGKSVQVSDASLQNARQVFSEIED) form a BRCA2 7 repeat. The residue at position 2035 (Thr-2035) is a Phosphothreonine. The stretch at 2051 to 2085 (NSSAFSGFSTASGKQVSILESSLHKVKGVLEEFDL) is one BRCA2 8 repeat. Ser-2095 bears the Phosphoserine mark. Positions 2270–2337 (GKRRGEPLIL…EPITCVPFRT (68 aa)) are interaction with HSF2BP. The tract at residues 2350–2545 (TAPGQEFLSK…SHKQLYTYGV (196 aa)) is interaction with FANCD2. The interval 2430-2450 (ENRQKQNIDGHGSDDSKNKIN) is disordered. The interval 2481–2832 (ITSLQNARDI…QRAYPIQWME (352 aa)) is interaction with SEM1. A Nuclear export signal; masked by interaction with SEM1 motif is present at residues 2682–2698 (AAKTLVLCVSDIISLSA). Ser-3291 carries the phosphoserine; by CDK1 and CDK2 modification. The residue at position 3319 (Ser-3319) is a Phosphoserine. Residue Thr-3387 is modified to Phosphothreonine; by CHEK1 and CHEK2. A disordered region spans residues 3393 to 3418 (EQESSQASTEECEKNKQDTITTKKYI).

In terms of assembly, monomer and dimer. Interacts with RAD51; regulates RAD51 recruitment and function at sites of DNA repair. Interacts with WDR16, USP11, DMC1, ROCK2 and NPM1. Interacts with SEM1; the interaction masks a nuclear export signal in BRCA2. Interacts with both nonubiquitinated and monoubiquitinated FANCD2; this complex also includes XRCC3 and phosphorylated FANCG. Part of a BRCA complex containing BRCA1, BRCA2 and PALB2. Component of the homologous recombination repair (HR) complex composed of ERCC5/XPG, BRCA2, PALB2, DSS1 and RAD51. Within the complex, interacts with ERCC5/XPG and PALB2. Interacts directly with PALB2 which may serve as a scaffold for a HR complex containing PALB2, BRCA2, RAD51C, RAD51 and XRCC3. Interacts with BRCA1 only in the presence of PALB2 which serves as the bridging protein. Interacts with POLH; the interaction is direct. Interacts with the TREX-2 complex subunits PCID2 and SEM1. Interacts with HSF2BP and BRME1; the interaction with HSF2BP is direct and allows the formation of a ternary complex. The complex BRME1:HSF2BP:BRCA2 interacts with SPATA22, MEIOB and RAD51. In terms of processing, phosphorylated by ATM upon irradiation-induced DNA damage. Phosphorylation by CHEK1 and CHEK2 regulates interaction with RAD51. Phosphorylation at Ser-3291 by CDK1 and CDK2 is low in S phase when recombination is active, but increases as cells progress towards mitosis; this phosphorylation prevents homologous recombination-dependent repair during S phase and G2 by inhibiting RAD51 binding. Ubiquitinated in the absence of DNA damage; this does not lead to proteasomal degradation. In contrast, ubiquitination in response to DNA damage leads to proteasomal degradation. In terms of tissue distribution, highest levels of expression in breast and thymus, with slightly lower levels in lung, ovary and spleen.

It localises to the nucleus. It is found in the cytoplasm. Its subcellular location is the cytoskeleton. The protein localises to the microtubule organizing center. The protein resides in the centrosome. Its function is as follows. Involved in double-strand break repair and/or homologous recombination. Binds RAD51 and potentiates recombinational DNA repair by promoting assembly of RAD51 onto single-stranded DNA (ssDNA). Acts by targeting RAD51 to ssDNA over double-stranded DNA, enabling RAD51 to displace replication protein-A (RPA) from ssDNA and stabilizing RAD51-ssDNA filaments by blocking ATP hydrolysis. Part of a PALB2-scaffolded HR complex containing RAD51C and which is thought to play a role in DNA repair by HR. May participate in S phase checkpoint activation. Binds selectively to ssDNA, and to ssDNA in tailed duplexes and replication fork structures. May play a role in the extension step after strand invasion at replication-dependent DNA double-strand breaks; together with PALB2 is involved in both POLH localization at collapsed replication forks and DNA polymerization activity. In concert with NPM1, regulates centrosome duplication. Interacts with the TREX-2 complex (transcription and export complex 2) subunits PCID2 and SEM1, and is required to prevent R-loop-associated DNA damage and thus transcription-associated genomic instability. Silencing of BRCA2 promotes R-loop accumulation at actively transcribed genes in replicating and non-replicating cells, suggesting that BRCA2 mediates the control of R-loop associated genomic instability, independently of its known role in homologous recombination. This Homo sapiens (Human) protein is Breast cancer type 2 susceptibility protein.